A 395-amino-acid polypeptide reads, in one-letter code: Elongation factor Tu (395 aa).

The 195-residue stretch at 10 to 204 (KTHANIGTIG…AVDSYIPTPE (195 aa)) folds into the tr-type G domain. The interval 19-26 (GHVDHGKT) is G1. Residue 19 to 26 (GHVDHGKT) participates in GTP binding. T26 provides a ligand contact to Mg(2+). Positions 60–64 (GITIN) are G2. The G3 stretch occupies residues 81–84 (DCPG). Residues 81–85 (DCPGH) and 136–139 (NKCD) each bind GTP. The segment at 136–139 (NKCD) is G4. The interval 174–176 (SAL) is G5.

Belongs to the TRAFAC class translation factor GTPase superfamily. Classic translation factor GTPase family. EF-Tu/EF-1A subfamily. As to quaternary structure, monomer.

The protein resides in the cytoplasm. The enzyme catalyses GTP + H2O = GDP + phosphate + H(+). GTP hydrolase that promotes the GTP-dependent binding of aminoacyl-tRNA to the A-site of ribosomes during protein biosynthesis. In Lysinibacillus sphaericus (strain C3-41), this protein is Elongation factor Tu.